The sequence spans 347 residues: MTVSEIHIPNSLLDRDCTTLSRHVLQQLNSFGADAQDLSAIMNRIALAGKLIARRLSRAGLMADVLGFTGETNVQGESVKKMDVFANDVFISVFKQSGLVCRLASEEMEKPYYIPENCPIGRYTLLYDPIDGSSNVDINLNVGSIFAIRQQEGDDLDGSASDLLANGDKQIAAGYILYGPSTILVYSLGSGVHSFILDPSLGEFILAQENIRIPNHGPIYSTNEGNFWQWDEALRDYTRYVHRHEGYTARYSGALVGDIHRILMQGGVFLYPGTEKNPDGKLRLLYETAPLAFLVEQAGGRASDGQKRLLDLIPSKLHQRTPAIIGSAEDVKLVESFISDHKQRQGN.

Positions 106, 128, 130, and 131 each coordinate Mg(2+). Residues 131–134 (DGSS), N223, Y251, and K281 each bind substrate. E287 contributes to the Mg(2+) binding site.

Belongs to the FBPase class 1 family. As to quaternary structure, homotetramer. The cofactor is Mg(2+).

The protein resides in the cytoplasm. The catalysed reaction is beta-D-fructose 1,6-bisphosphate + H2O = beta-D-fructose 6-phosphate + phosphate. It participates in carbohydrate biosynthesis; Calvin cycle. The sequence is that of Fructose-1,6-bisphosphatase class 1 from Synechocystis sp. (strain ATCC 27184 / PCC 6803 / Kazusa).